A 62-amino-acid chain; its full sequence is Ubiquinol-cytochrome c reductase complex 6.7 kDa protein (62 aa).

Topologically, residues 2 to 25 (TSPAAAGNGLFKFLRPKLRPQSTD) are mitochondrial matrix. A helical transmembrane segment spans residues 26–44 (IQAAAGWGVAAVTGALWVI). At 45–62 (QPWDFLRKTFIEKQEEEK) the chain is on the mitochondrial intermembrane side.

It belongs to the UQCR11/QCR10 family. As to quaternary structure, component of the ubiquinol-cytochrome c oxidoreductase (cytochrome b-c1 complex, complex III, CIII), a multisubunit enzyme composed of 3 respiratory subunits cytochrome b, cytochrome c1 and Rieske protein, 2 core protein subunits, and additional low-molecular weight protein subunits. The complex exists as an obligatory dimer and forms supercomplexes (SCs) in the inner mitochondrial membrane with cytochrome c oxidase (complex IV, CIV).

It localises to the mitochondrion inner membrane. Its function is as follows. Component of the ubiquinol-cytochrome c oxidoreductase, a multisubunit transmembrane complex that is part of the mitochondrial electron transport chain which drives oxidative phosphorylation. The respiratory chain contains 3 multisubunit complexes succinate dehydrogenase (complex II, CII), ubiquinol-cytochrome c oxidoreductase (cytochrome b-c1 complex, complex III, CIII) and cytochrome c oxidase (complex IV, CIV), that cooperate to transfer electrons derived from NADH and succinate to molecular oxygen, creating an electrochemical gradient over the inner membrane that drives transmembrane transport and the ATP synthase. The cytochrome b-c1 complex catalyzes electron transfer from ubiquinol to cytochrome c, linking this redox reaction to translocation of protons across the mitochondrial inner membrane, with protons being carried across the membrane as hydrogens on the quinol. In the process called Q cycle, 2 protons are consumed from the matrix, 4 protons are released into the intermembrane space and 2 electrons are passed to cytochrome c. QCR10 has a role in CIII assembly and RIP1 stability. The protein is Ubiquinol-cytochrome c reductase complex 6.7 kDa protein of Solanum tuberosum (Potato).